The primary structure comprises 453 residues: Glutamyl-tRNA(Gln) amidotransferase subunit A (453 aa).

Residues K56 and S131 each act as charge relay system in the active site. S155 (acyl-ester intermediate) is an active-site residue.

The protein belongs to the amidase family. GatA subfamily. In terms of assembly, heterotrimer of A, B and C subunits.

The enzyme catalyses L-glutamyl-tRNA(Gln) + L-glutamine + ATP + H2O = L-glutaminyl-tRNA(Gln) + L-glutamate + ADP + phosphate + H(+). In terms of biological role, allows the formation of correctly charged Gln-tRNA(Gln) through the transamidation of misacylated Glu-tRNA(Gln) in organisms which lack glutaminyl-tRNA synthetase. The reaction takes place in the presence of glutamine and ATP through an activated gamma-phospho-Glu-tRNA(Gln). In Campylobacter jejuni (strain RM1221), this protein is Glutamyl-tRNA(Gln) amidotransferase subunit A.